A 189-amino-acid polypeptide reads, in one-letter code: MGLLDAGFSRDNVLVAPVDAVLNWARLSSLWPMGFGLACCAIEMMATNASNYDLERFGIFPRSSPRQSDLMIVAGTVSMKMAERVVRLYEQMPEPRYVLSMGSCSNCGGPYWEHGYHVLKGVDRVIPVDVYVPGCPPRPEALIGGLMKVQELIRMEQIGMSRQEALKKLAETGVEPRPFIERERSSAGA.

[4Fe-4S] cluster contacts are provided by C39, C40, C104, and C135.

It belongs to the complex I 20 kDa subunit family. NDH-1 is composed of 14 different subunits. Subunits NuoB, C, D, E, F, and G constitute the peripheral sector of the complex. [4Fe-4S] cluster is required as a cofactor.

The protein resides in the cell inner membrane. It catalyses the reaction a quinone + NADH + 5 H(+)(in) = a quinol + NAD(+) + 4 H(+)(out). In terms of biological role, NDH-1 shuttles electrons from NADH, via FMN and iron-sulfur (Fe-S) centers, to quinones in the respiratory chain. The immediate electron acceptor for the enzyme in this species is believed to be a menaquinone. Couples the redox reaction to proton translocation (for every two electrons transferred, four hydrogen ions are translocated across the cytoplasmic membrane), and thus conserves the redox energy in a proton gradient. The chain is NADH-quinone oxidoreductase subunit B from Chlorobium luteolum (strain DSM 273 / BCRC 81028 / 2530) (Pelodictyon luteolum).